We begin with the raw amino-acid sequence, 162 residues long: uncharacterized protein (162 aa).

This is an uncharacterized protein from Salmonella typhi.